Consider the following 84-residue polypeptide: Antimicrobial peptide MeuNaTxbeta-2 (84 aa).

A signal peptide spans 1–20 (MMKTVIVLIVFSLVMIVVKS). Positions 21 to 83 (DNGYLLDKYT…LWHYETNRCR (63 aa)) constitute an LCN-type CS-alpha/beta domain. Intrachain disulfides connect cysteine 32–cysteine 82, cysteine 36–cysteine 57, cysteine 43–cysteine 64, and cysteine 47–cysteine 66.

As to expression, expressed by the venom gland.

The protein resides in the secreted. Antimicrobial peptide with activity against both Gram-positive and -negative bacteria. The protein is Antimicrobial peptide MeuNaTxbeta-2 of Mesobuthus eupeus (Lesser Asian scorpion).